The following is a 268-amino-acid chain: Tryptophan synthase alpha chain (268 aa).

Active-site proton acceptor residues include Glu-49 and Asp-60.

Belongs to the TrpA family. Tetramer of two alpha and two beta chains.

The enzyme catalyses (1S,2R)-1-C-(indol-3-yl)glycerol 3-phosphate + L-serine = D-glyceraldehyde 3-phosphate + L-tryptophan + H2O. Its pathway is amino-acid biosynthesis; L-tryptophan biosynthesis; L-tryptophan from chorismate: step 5/5. Its function is as follows. The alpha subunit is responsible for the aldol cleavage of indoleglycerol phosphate to indole and glyceraldehyde 3-phosphate. The sequence is that of Tryptophan synthase alpha chain from Pseudomonas aeruginosa (strain LESB58).